Reading from the N-terminus, the 638-residue chain is Chaperone protein HtpG (638 aa).

An a; substrate-binding region spans residues 1 to 343 (MTSTIDSDGA…SADLPLNISR (343 aa)). A b region spans residues 344-557 (EMIQESPILA…ESGPDRQLEK (214 aa)). Residues 558–638 (ILVGVGQLTG…VERGLRGSTA (81 aa)) form a c region.

It belongs to the heat shock protein 90 family. In terms of assembly, homodimer.

It is found in the cytoplasm. Functionally, molecular chaperone. Has ATPase activity. The protein is Chaperone protein HtpG of Nitrobacter hamburgensis (strain DSM 10229 / NCIMB 13809 / X14).